Here is a 269-residue protein sequence, read N- to C-terminus: uncharacterized protein (269 aa).

The ACT domain maps to 14-89 (FEYEIQVNRP…KLREPRLRDR (76 aa)).

This is an uncharacterized protein from Bacillus subtilis (strain 168).